Reading from the N-terminus, the 154-residue chain is Transcriptional repressor NrdR (154 aa).

Residues 3–34 (CPTCQYNGTRVVDSRPADDGNSIRRRRECEKC) fold into a zinc finger. The region spanning 49–139 (LIVVKKDGAR…VYRQFKDISV (91 aa)) is the ATP-cone domain.

It belongs to the NrdR family. Requires Zn(2+) as cofactor.

Functionally, negatively regulates transcription of bacterial ribonucleotide reductase nrd genes and operons by binding to NrdR-boxes. In Listeria monocytogenes serotype 4a (strain HCC23), this protein is Transcriptional repressor NrdR.